Consider the following 583-residue polypeptide: Aspartate--tRNA ligase (583 aa).

Glu-174 contributes to the L-aspartate binding site. Positions 198-201 (QITK) are aspartate. L-aspartate is bound at residue Arg-220. Residues 220–222 (RDE) and Gln-229 contribute to the ATP site. His-443 is an L-aspartate binding site. Glu-477 contacts ATP. Residue Arg-484 participates in L-aspartate binding. 529–532 (GLDR) lines the ATP pocket.

The protein belongs to the class-II aminoacyl-tRNA synthetase family. Type 1 subfamily. As to quaternary structure, homodimer.

It localises to the cytoplasm. It catalyses the reaction tRNA(Asp) + L-aspartate + ATP = L-aspartyl-tRNA(Asp) + AMP + diphosphate. In terms of biological role, catalyzes the attachment of L-aspartate to tRNA(Asp) in a two-step reaction: L-aspartate is first activated by ATP to form Asp-AMP and then transferred to the acceptor end of tRNA(Asp). This is Aspartate--tRNA ligase from Streptococcus agalactiae serotype III (strain NEM316).